The following is a 404-amino-acid chain: Phosphoglycerate kinase (404 aa).

Substrate contacts are provided by residues 21–23, arginine 36, 59–62, arginine 119, and arginine 162; these read DFN and HLGR. Residues lysine 213, glycine 300, glutamate 331, and 360-363 contribute to the ATP site; that span reads GGDS.

This sequence belongs to the phosphoglycerate kinase family. In terms of assembly, monomer.

It localises to the cytoplasm. The enzyme catalyses (2R)-3-phosphoglycerate + ATP = (2R)-3-phospho-glyceroyl phosphate + ADP. Its pathway is carbohydrate degradation; glycolysis; pyruvate from D-glyceraldehyde 3-phosphate: step 2/5. The protein is Phosphoglycerate kinase of Oenococcus oeni (strain ATCC BAA-331 / PSU-1).